The primary structure comprises 1102 residues: MPVMKGLLAPQNTFLDTIATRFDGTHSNFILANAQVAKGFPIVYCSDGFCELAGFARTEVMQKSCSCKFLFGVETNEQLMLQIEKSLEEKVEFKGEIMFYKKNGAPFWCLLDIVPIKNEKGDVVLFLASFKDITDTKVKITSEDKKEDRAKGRSRAGSHFDSARRRSRAVLYHISGHLQRREKNKLKINNNVFVDKPAFPEYKVSDAKKSKFILLHFSTFKAGWDWLILLATFYVAVTVPYNVCFIGNEDLSTTRSTTVSDIAVEILFIIDIILNFRTTYVSKSGQVIFEARSICIHYVTTWFIIDLIAALPFDLLYAFNVTVVSLVHLLKTVRLLRLLRLLQKLDRYSQHSTIVLTLLMSMFALLAHWMACIWYVIGKMEREDNSLLKWEVGWLHELGKRLESPYYGNNTLGGPSIRSAYIAALYFTLSSLTSVGFGNVSANTDAEKIFSICTMLIGALMHALVFGNVTAIIQRMYSRWSLYHTRTKDLKDFIRVHHLPQQLKQRMLEYFQTTWSVNNGIDSNELLKDFPDELRSDITMHLNKEILQLSLFECASRGCLRSLSLHIKTSFCAPGEYLLRQGDALQAIYFVCSGSMEVLKDSMVLAILGKGDLIGANLSIKDQVIKTNADVKALTYCDLQCIILKGLFEVLGLYPEYAHKFVEDIQHDLTYNLREGHESDVISRLSNKSTVPQAEPKGNGSIKKRLPSIVEDEEEEEVEEEETTSLSPIYTRGSSVSHSKKTGSSKSYLGLSLKQLTSGTVPFHSPIRVSSANSPKTKQEADPPNHGTRKEKNLKVQLCSLGTAGTPELSPRIVDGIEDGNSSEETQTFDFGSEQIRPEPRISPSLGESEIGAAFLFIKAEETKQQINKLNSEVTTLTQEVSQLGKDMRSIMQLLENILSPQQPSQFCSLHPTSICPSRESFQTRVSWSAHQPCLHLQANGAHLYHGNVTSDIWSVDPSLVGSNPQRTEAHEQSPVDSELHHSPNLAYSPSHCQVIQEGHLQFLRCISPHSDTTLTPLQSISATLSSSVCSSSETSLHLVLPSRSEEGSITHGPVSSFSLENLPGSWDREGMMSASTEPLENFPVEVVTSTADVKDSKAINV.

Residues 1-225 (MPVMKGLLAP…HFSTFKAGWD (225 aa)) lie on the Cytoplasmic side of the membrane. In terms of domain architecture, PAS spans 18-90 (IATRFDGTHS…LQIEKSLEEK (73 aa)). One can recognise a PAC domain in the interval 93–145 (FKGEIMFYKKNGAPFWCLLDIVPIKNEKGDVVLFLASFKDITDTKVKITSEDK). A helical membrane pass occupies residues 226-246 (WLILLATFYVAVTVPYNVCFI). Over 247-255 (GNEDLSTTR) the chain is Extracellular. The chain crosses the membrane as a helical span at residues 256–276 (STTVSDIAVEILFIIDIILNF). Residues 277 to 298 (RTTYVSKSGQVIFEARSICIHY) are Cytoplasmic-facing. Residues 299-319 (VTTWFIIDLIAALPFDLLYAF) form a helical membrane-spanning segment. Residue Asn320 is glycosylated (N-linked (GlcNAc...) asparagine). Residues 320–327 (NVTVVSLV) lie on the Extracellular side of the membrane. Residues 328 to 348 (HLLKTVRLLRLLRLLQKLDRY) form a helical; Voltage-sensor membrane-spanning segment. The Cytoplasmic segment spans residues 349 to 353 (SQHST). Residues 354–374 (IVLTLLMSMFALLAHWMACIW) traverse the membrane as a helical segment. The Extracellular portion of the chain corresponds to 375–419 (YVIGKMEREDNSLLKWEVGWLHELGKRLESPYYGNNTLGGPSIRS). N-linked (GlcNAc...) asparagine glycosylation is present at Asn409. Residues 420-440 (AYIAALYFTLSSLTSVGFGNV) constitute an intramembrane region (pore-forming). The Selectivity filter signature appears at 434-439 (SVGFGN). The Extracellular portion of the chain corresponds to 441–448 (SANTDAEK). The chain crosses the membrane as a helical span at residues 449–469 (IFSICTMLIGALMHALVFGNV). Over 470-1102 (TAIIQRMYSR…DVKDSKAINV (633 aa)) the chain is Cytoplasmic. The segment at 551-668 (LFECASRGCL…HKFVEDIQHD (118 aa)) is cNMP-binding domain. 4 disordered regions span residues 683-744 (SRLS…KTGS), 762-793 (PFHS…KEKN), 818-845 (EDGN…ISPS), and 960-983 (LVGS…LHHS). A compositionally biased stretch (acidic residues) spans 710-723 (VEDEEEEEVEEEET). Basic and acidic residues predominate over residues 777–793 (TKQEADPPNHGTRKEKN). Residues 968 to 982 (TEAHEQSPVDSELHH) are compositionally biased toward basic and acidic residues.

Belongs to the potassium channel family. H (Eag) (TC 1.A.1.20) subfamily. Kv12.1/KCNH8 sub-subfamily. As to quaternary structure, the potassium channel is probably composed of a homo- or heterotetrameric complex of pore-forming alpha subunits that can associate with modulating beta subunits. Detected in superior cervical, mesenteric and coeliac ganglia. Expressed in brain (piriform cortex, olfactory tubercle, cerebral cortex, hippocampus pyramidial cells and dentate gyrus and basal ganglia of caudate/putamen and accumbens nucleus). Expressed in pituitary.

The protein resides in the membrane. The enzyme catalyses K(+)(in) = K(+)(out). Its function is as follows. Pore-forming (alpha) subunit of a voltage-gated delayed rectifier potassium channel that mediates outward-rectifying potassium currents. Elicits a slowly activating, non-inactivating and slowly deactivation outwards potassium current at depolarizating voltages from -30 mV to +50mV. Shows no obvious change in the activation rate from different holding potentials. Activation is strongly dependent on the pH of the external solution. This chain is Voltage-gated delayed rectifier potassium channel KCNH8, found in Rattus norvegicus (Rat).